Consider the following 348-residue polypeptide: Holliday junction branch migration complex subunit RuvB (348 aa).

Positions Met1–Arg10 are enriched in low complexity. Positions Met1 to Leu37 are disordered. The segment at Pro13–Tyr198 is large ATPase domain (RuvB-L). 9 residues coordinate ATP: Leu37, Arg38, Gly79, Lys82, Thr83, Thr84, Arg188, Tyr198, and Arg235. Thr83 contacts Mg(2+). The small ATPAse domain (RuvB-S) stretch occupies residues Gly199–Arg271. The tract at residues His274–Ala348 is head domain (RuvB-H). Residues Arg329 and Arg334 each contribute to the DNA site.

It belongs to the RuvB family. Homohexamer. Forms an RuvA(8)-RuvB(12)-Holliday junction (HJ) complex. HJ DNA is sandwiched between 2 RuvA tetramers; dsDNA enters through RuvA and exits via RuvB. An RuvB hexamer assembles on each DNA strand where it exits the tetramer. Each RuvB hexamer is contacted by two RuvA subunits (via domain III) on 2 adjacent RuvB subunits; this complex drives branch migration. In the full resolvosome a probable DNA-RuvA(4)-RuvB(12)-RuvC(2) complex forms which resolves the HJ.

The protein localises to the cytoplasm. The enzyme catalyses ATP + H2O = ADP + phosphate + H(+). The RuvA-RuvB-RuvC complex processes Holliday junction (HJ) DNA during genetic recombination and DNA repair, while the RuvA-RuvB complex plays an important role in the rescue of blocked DNA replication forks via replication fork reversal (RFR). RuvA specifically binds to HJ cruciform DNA, conferring on it an open structure. The RuvB hexamer acts as an ATP-dependent pump, pulling dsDNA into and through the RuvAB complex. RuvB forms 2 homohexamers on either side of HJ DNA bound by 1 or 2 RuvA tetramers; 4 subunits per hexamer contact DNA at a time. Coordinated motions by a converter formed by DNA-disengaged RuvB subunits stimulates ATP hydrolysis and nucleotide exchange. Immobilization of the converter enables RuvB to convert the ATP-contained energy into a lever motion, pulling 2 nucleotides of DNA out of the RuvA tetramer per ATP hydrolyzed, thus driving DNA branch migration. The RuvB motors rotate together with the DNA substrate, which together with the progressing nucleotide cycle form the mechanistic basis for DNA recombination by continuous HJ branch migration. Branch migration allows RuvC to scan DNA until it finds its consensus sequence, where it cleaves and resolves cruciform DNA. This chain is Holliday junction branch migration complex subunit RuvB, found in Synechococcus sp. (strain CC9605).